Reading from the N-terminus, the 310-residue chain is Putative S-adenosyl-L-methionine-dependent methyltransferase MAB_4587c (310 aa).

S-adenosyl-L-methionine is bound by residues Asp126 and 155–156 (DL).

Belongs to the UPF0677 family.

Exhibits S-adenosyl-L-methionine-dependent methyltransferase activity. This Mycobacteroides abscessus (strain ATCC 19977 / DSM 44196 / CCUG 20993 / CIP 104536 / JCM 13569 / NCTC 13031 / TMC 1543 / L948) (Mycobacterium abscessus) protein is Putative S-adenosyl-L-methionine-dependent methyltransferase MAB_4587c.